A 256-amino-acid polypeptide reads, in one-letter code: Pimeloyl-[acyl-carrier protein] methyl ester esterase (256 aa).

The AB hydrolase-1 domain occupies 15-242 (HLVLLHGWGL…AAHAPFISHP (228 aa)). Substrate-binding positions include Trp22, 82–83 (SL), and 143–147 (FLALQ). The active-site Nucleophile is Ser82. Residues Asp207 and His235 contribute to the active site. His235 is a substrate binding site.

Belongs to the AB hydrolase superfamily. Carboxylesterase BioH family. As to quaternary structure, monomer.

It localises to the cytoplasm. The catalysed reaction is 6-carboxyhexanoyl-[ACP] methyl ester + H2O = 6-carboxyhexanoyl-[ACP] + methanol + H(+). The protein operates within cofactor biosynthesis; biotin biosynthesis. Its function is as follows. The physiological role of BioH is to remove the methyl group introduced by BioC when the pimeloyl moiety is complete. It allows to synthesize pimeloyl-ACP via the fatty acid synthetic pathway through the hydrolysis of the ester bonds of pimeloyl-ACP esters. The polypeptide is Pimeloyl-[acyl-carrier protein] methyl ester esterase (Escherichia coli O157:H7).